The following is a 109-amino-acid chain: Protein phosphatase 1 regulatory subunit 1C (109 aa).

Positions 25–109 (AEQIRKRRPT…TNEREEQRDH (85 aa)) are disordered. The segment covering 45 to 54 (NPPEIDDKRV) has biased composition (basic and acidic residues). The span at 55-75 (PNTQGELQNASPKQRKQSVYT) shows a compositional bias: polar residues. The span at 100–109 (TNEREEQRDH) shows a compositional bias: basic and acidic residues.

This sequence belongs to the protein phosphatase inhibitor 1 family.

The protein localises to the cytoplasm. Functionally, may increase cell susceptibility to TNF-induced apoptosis. This chain is Protein phosphatase 1 regulatory subunit 1C (PPP1R1C), found in Pongo abelii (Sumatran orangutan).